The sequence spans 30 residues: Dendrotoxin A (30 aa).

Cys3 and Cys22 form a disulfide bridge.

It belongs to the three-finger toxin family. Short-chain subfamily. Acn-esterase inhibitor sub-subfamily. Contains 4 disulfide bonds. In terms of tissue distribution, expressed by the venom gland.

It localises to the secreted. Inhibits acetylcholinesterase. Has been described to inhibit both the slowly and the rapidly inactivating phases of potassium efflux. The chain is Dendrotoxin A from Dendroaspis angusticeps (Eastern green mamba).